Reading from the N-terminus, the 235-residue chain is MAYARALLKLSGEALMGNQGYGIDPEIVQAIARDVAEVVATGTQLAIVVGGGNIFRGLKGSAAGMDRATADYVGMLATVMNAITLQDGLERAGIPTRVQTAIEMQEVAEPYIRRRAMRHLEKGRVVVFGAGCGNPFFTTDTTAALRAAEISADVVFKATKVDGVYDKDPHQFPDAVRYDSLTFQQVLSGELAVMDSTAIALCKDNNIPIVVFNLFEPGNIGKAVAGEPIGSRISN.

An ATP-binding site is contributed by 9-12 (KLSG). The interval 17 to 22 (GNQGYG) is involved in allosteric activation by GTP. Gly51 is a UMP binding site. Residues Gly52 and Arg56 each contribute to the ATP site. Residues Asp71 and 132-139 (CGNPFFTT) each bind UMP. 3 residues coordinate ATP: Thr159, Tyr165, and Asp168.

It belongs to the UMP kinase family. Homohexamer.

The protein resides in the cytoplasm. It catalyses the reaction UMP + ATP = UDP + ADP. The protein operates within pyrimidine metabolism; CTP biosynthesis via de novo pathway; UDP from UMP (UMPK route): step 1/1. Its activity is regulated as follows. Allosterically activated by GTP. Inhibited by UTP. Its function is as follows. Catalyzes the reversible phosphorylation of UMP to UDP. The protein is Uridylate kinase of Synechococcus sp. (strain CC9311).